Consider the following 337-residue polypeptide: Inositol 2-dehydrogenase (337 aa).

Belongs to the Gfo/Idh/MocA family. Homotetramer.

The enzyme catalyses myo-inositol + NAD(+) = scyllo-inosose + NADH + H(+). In terms of biological role, involved in the oxidation of myo-inositol (MI) to 2-keto-myo-inositol (2KMI or 2-inosose). The protein is Inositol 2-dehydrogenase of Arthrobacter sp. (strain FB24).